Consider the following 437-residue polypeptide: Major royal jelly protein 6 (437 aa).

An N-terminal signal peptide occupies residues 1–20; that stretch reads MTNWLLLIVCLSIACQDVTS. 5 N-linked (GlcNAc...) asparagine glycosylation sites follow: Asn78, Asn164, Asn181, Asn201, and Asn324.

Belongs to the major royal jelly protein family. In terms of tissue distribution, found in and secreted from the hypopharyngeal glands of the worker honey bee (at protein level); expression peaks at 20 days post eclosion. Expressed in the spermatheca of adult queen bees (at protein level); Expression levels are higher in mated queens than in virgin queens. Expressed at low level in the brains of adult worker bees. Protein abundance does not seem to correlate with transcript abundance.

The protein resides in the secreted. Component of royal jelly, a substance produced in the hypopharyngeal gland containing proteins, free amino acids, fatty acids, sugars and other nutrients, which is fed to developing larvae by worker nurse bees. All larvae are fed some royal jelly (also known as worker jelly) early in their development but it forms the principal source of nutrition for larvae destined to become queen bees. Produced in the spermatheca of adult queen bees, along with other major royal jelly proteins, where it may act as a nutrient supply for sperm stored by mated queens, or be involved in energy metabolism. This chain is Major royal jelly protein 6, found in Apis mellifera (Honeybee).